Reading from the N-terminus, the 130-residue chain is MSNVPAELKYTTSHEWVLHEGGGIYSVGITEHAQELLGDMVFIDLPEVGTVVAAGDDCAVAESVKAASDIYAPISGEIVEVNDDLESSPELVNSAPYADGWLFRIRISDESDLDELLDAEGYQASLEEDE.

Residues 24-106 form the Lipoyl-binding domain; the sequence is IYSVGITEHA…YADGWLFRIR (83 aa). The residue at position 65 (Lys-65) is an N6-lipoyllysine.

It belongs to the GcvH family. In terms of assembly, the glycine cleavage system is composed of four proteins: P, T, L and H. (R)-lipoate serves as cofactor.

In terms of biological role, the glycine cleavage system catalyzes the degradation of glycine. The H protein shuttles the methylamine group of glycine from the P protein to the T protein. This is Glycine cleavage system H protein from Pectobacterium carotovorum subsp. carotovorum (strain PC1).